A 701-amino-acid chain; its full sequence is Heterodisulfide reductase subunit A-like protein (701 aa).

An FAD-binding site is contributed by 152-175 (GGGIAGIFAALDIANAGYKVYLVE). One can recognise a 4Fe-4S ferredoxin-type 1 domain in the interval 239–268 (KQTWVDWDLCTGCGACTDVCPPKARVPDEF). Residues Cys248, Cys251, Cys254, Cys326, Cys627, Cys630, Cys633, Cys637, Cys660, Cys663, Cys666, and Cys670 each coordinate [4Fe-4S] cluster. 4Fe-4S ferredoxin-type domains follow at residues 618–647 (LVSE…MTKY) and 651–680 (MRAE…LHGF).

This sequence belongs to the HdrA family. In terms of assembly, the heterodisulfide reductase is composed of three subunits; HdlA, HdlB and HdlC. It forms a complex with the F420-non-reducing hydrogenase (Mvh), which provides the reducing equivalents to the heterodisulfide reductase. Requires [4Fe-4S] cluster as cofactor. FAD is required as a cofactor.

The protein resides in the cytoplasm. Has oxidoreductase activity. The Hdl and Mvh subunits may together mediate electron transfer from hydrogen to an unidentified electron acceptor on the cytoplasmic side of the membrane. The chain is Heterodisulfide reductase subunit A-like protein (hdlA) from Archaeoglobus profundus (strain DSM 5631 / JCM 9629 / NBRC 100127 / Av18).